The chain runs to 125 residues: Lectin (125 aa).

In terms of domain architecture, C-type lectin spans 1–120 (MDYEILFSDE…CGGARRVICE (120 aa)). Intrachain disulfides connect Cys21–Cys119 and Cys96–Cys111.

Homodimer.

Functionally, role in the defense system of the organism against microorganisms. This calcium-binding lectin binds galactose. This is Lectin from Polyandrocarpa misakiensis (Tunicate).